Reading from the N-terminus, the 352-residue chain is MKEQLNQLSAYQPGLSPRALKEKYGIEGDLYKLASNENLYGPSPKVKEAISAHLDELYYYPETGSPTLKAAISKHLNVDQSRILFGAGLDEVILMISRAVLTPGDTIVTSEATFGQYYHNAIVESANVIQVPLKDGGFDLDGILKEVNDDTSLVWLCNPNNPTGTYFNHESLDSFLSQVPSHVPVLIDEAYFEFVTAEDYPDTLALQQKYDNAFLLRTFSKAYGLAGLRVGYVVASEHAIEKWNIIRPPFNVTRISEYAAVAALEDQQYLKEVTHKNSVERERFYQLPQSEHFLPSQTNFIFVKTKRVNELYEALLNVGCITRPFPTGVRITIGFKEQNGKMLEVLSNFKYE.

N6-(pyridoxal phosphate)lysine is present on Lys-221.

The protein belongs to the class-II pyridoxal-phosphate-dependent aminotransferase family. Histidinol-phosphate aminotransferase subfamily. In terms of assembly, homodimer. It depends on pyridoxal 5'-phosphate as a cofactor.

It catalyses the reaction L-histidinol phosphate + 2-oxoglutarate = 3-(imidazol-4-yl)-2-oxopropyl phosphate + L-glutamate. The protein operates within amino-acid biosynthesis; L-histidine biosynthesis; L-histidine from 5-phospho-alpha-D-ribose 1-diphosphate: step 7/9. The chain is Histidinol-phosphate aminotransferase from Staphylococcus aureus (strain MRSA252).